We begin with the raw amino-acid sequence, 838 residues long: uncharacterized protein (838 aa).

This is an uncharacterized protein from Rickettsia conorii (strain ATCC VR-613 / Malish 7).